The sequence spans 905 residues: Microtubule-associated protein 10 (905 aa).

7 disordered regions span residues alanine 30–arginine 51, threonine 199–glycine 235, alanine 329–histidine 362, serine 434–glutamate 458, serine 547–proline 586, arginine 721–valine 772, and lysine 786–leucine 855. Residues glutamate 34 to glutamate 43 show a composition bias toward acidic residues. Positions serine 208–proline 227 are enriched in low complexity. Basic and acidic residues predominate over residues cysteine 443 to serine 453. Residues alanine 567–isoleucine 579 show a composition bias toward polar residues. Basic and acidic residues predominate over residues arginine 721–lysine 736. A compositionally biased stretch (polar residues) spans histidine 737–glycine 748. The span at glutamate 790–serine 801 shows a compositional bias: low complexity. Residues serine 830 to leucine 855 show a composition bias toward polar residues.

Interacts (via middle region) with microtubules. In terms of tissue distribution, expressed in different cell lines (at protein level).

It is found in the cytoplasm. The protein localises to the cytoskeleton. The protein resides in the spindle pole. Its subcellular location is the microtubule organizing center. It localises to the centrosome. It is found in the midbody. Its function is as follows. Microtubule-associated protein (MAP) that plays a role in the regulation of cell division; promotes microtubule stability and participates in the organization of the spindle midzone and normal progress of cytokinesis. The chain is Microtubule-associated protein 10 (MAP10) from Homo sapiens (Human).